Reading from the N-terminus, the 209-residue chain is MIRFITIPDFADYQVILKLMEDYVNKVINDHEPEIIYLVEHSEVYTAGTNYKQEELLNYGDIPVIYTGRGGKFTFHGPGQRVIYPILNLDSPNRYKDLKLYIKMLEEWIINSLNYFGIKAYIIKDKVGIWVKVRKDEFAKIAAIGVRVRKWVTYHGVAINISTDLSKFSGIIPCGLENSLVTSLNQLGIHVEMSEFDKIIQTEFNKIFK.

Residues 30–209 (DHEPEIIYLV…IQTEFNKIFK (180 aa)) enclose the BPL/LPL catalytic domain. Substrate contacts are provided by residues 69-76 (RGGKFTFH), 143-145 (AIG), and 156-158 (GVA). Catalysis depends on cysteine 174, which acts as the Acyl-thioester intermediate.

It belongs to the LipB family.

It is found in the cytoplasm. The catalysed reaction is octanoyl-[ACP] + L-lysyl-[protein] = N(6)-octanoyl-L-lysyl-[protein] + holo-[ACP] + H(+). It participates in protein modification; protein lipoylation via endogenous pathway; protein N(6)-(lipoyl)lysine from octanoyl-[acyl-carrier-protein]: step 1/2. Functionally, catalyzes the transfer of endogenously produced octanoic acid from octanoyl-acyl-carrier-protein onto the lipoyl domains of lipoate-dependent enzymes. Lipoyl-ACP can also act as a substrate although octanoyl-ACP is likely to be the physiological substrate. This is Octanoyltransferase from Rickettsia rickettsii (strain Iowa).